The primary structure comprises 361 residues: Carbamoyl phosphate synthase small chain (361 aa).

The CPSase stretch occupies residues 1 to 173 (MRAALALEDG…SVREEYRFSD (173 aa)). Positions 45, 225, and 227 each coordinate L-glutamine. In terms of domain architecture, Glutamine amidotransferase type-1 spans 177-361 (EIVVIDCGVK…DEFLAMCREH (185 aa)). The active-site Nucleophile is the Cys252. Positions 253, 256, 294, 296, and 297 each coordinate L-glutamine. Residues His337 and Glu339 contribute to the active site.

It belongs to the CarA family. As to quaternary structure, composed of two chains; the small (or glutamine) chain promotes the hydrolysis of glutamine to ammonia, which is used by the large (or ammonia) chain to synthesize carbamoyl phosphate. Tetramer of heterodimers (alpha,beta)4.

The enzyme catalyses hydrogencarbonate + L-glutamine + 2 ATP + H2O = carbamoyl phosphate + L-glutamate + 2 ADP + phosphate + 2 H(+). The catalysed reaction is L-glutamine + H2O = L-glutamate + NH4(+). The protein operates within amino-acid biosynthesis; L-arginine biosynthesis; carbamoyl phosphate from bicarbonate: step 1/1. It participates in pyrimidine metabolism; UMP biosynthesis via de novo pathway; (S)-dihydroorotate from bicarbonate: step 1/3. Its function is as follows. Small subunit of the glutamine-dependent carbamoyl phosphate synthetase (CPSase). CPSase catalyzes the formation of carbamoyl phosphate from the ammonia moiety of glutamine, carbonate, and phosphate donated by ATP, constituting the first step of 2 biosynthetic pathways, one leading to arginine and/or urea and the other to pyrimidine nucleotides. The small subunit (glutamine amidotransferase) binds and cleaves glutamine to supply the large subunit with the substrate ammonia. This Methanopyrus kandleri (strain AV19 / DSM 6324 / JCM 9639 / NBRC 100938) protein is Carbamoyl phosphate synthase small chain.